The sequence spans 263 residues: MAAAAAAAAAAAAGDSDSWDADTFSMEDPVRKVAGGGTAGGDRWEGEDEDEDVKDNWDDDDDENKEEAEVKPEVKISEKKKIAEKIKEKERQQKKRQEEIKKRLEEPEESKVLTPEEQLADKLRLKKLQEESDLELAKETFGVNNTVYGIDAMNPSSRDDFTEFGKLLKDKITQYEKSLYYASFLEALVRDVCISLEIDDLKKITNSLTVLCSEKQKQEKQSKAKKKKKGVVPGGGLKATMKDDLADYGGYEGGYVQDYEDFM.

The segment covering 1–13 has biased composition (low complexity); the sequence is MAAAAAAAAAAAA. Residues 1–115 form a disordered region; it reads MAAAAAAAAA…EPEESKVLTP (115 aa). Ala2 carries the post-translational modification N-acetylalanine. The interval 6 to 74 is sufficient for interaction with EIF3B; it reads AAAAAAAAGD…KEEAEVKPEV (69 aa). A phosphoserine mark is found at Ser16, Ser18, and Ser25. Positions 45-66 are enriched in acidic residues; that stretch reads EGEDEDEDVKDNWDDDDDENKE. A compositionally biased stretch (basic and acidic residues) spans 67 to 111; sequence EAEVKPEVKISEKKKIAEKIKEKERQQKKRQEEIKKRLEEPEESK. A coiled-coil region spans residues 75 to 140; sequence KISEKKKIAE…ESDLELAKET (66 aa). Residue Lys111 forms a Glycyl lysine isopeptide (Lys-Gly) (interchain with G-Cter in SUMO2) linkage. Thr114 is modified (phosphothreonine). Ser132 is subject to Phosphoserine. The interval 248 to 263 is promotes stable association with the 40S ribosome; sequence YGGYEGGYVQDYEDFM. Position 259 is a phosphotyrosine (Tyr259).

Belongs to the eIF-3 subunit J family. Component of the eukaryotic translation initiation factor 3 (eIF-3) complex, which is composed of 13 subunits: EIF3A, EIF3B, EIF3C, EIF3D, EIF3E, EIF3F, EIF3G, EIF3H, EIF3I, EIF3J, EIF3K, EIF3L and EIF3M. The eIF-3 complex appears to include 3 stable modules: module A is composed of EIF3A, EIF3B, EIF3G and EIF3I; module B is composed of EIF3F, EIF3H, and EIF3M; and module C is composed of EIF3C, EIF3D, EIF3E, EIF3K and EIF3L. EIF3C of module C binds EIF3B of module A and EIF3H of module B, thereby linking the three modules. EIF3J is a labile subunit that binds to the eIF-3 complex via EIF3B. The eIF-3 complex interacts with RPS6KB1 under conditions of nutrient depletion. Mitogenic stimulation leads to binding and activation of a complex composed of MTOR and RPTOR, leading to phosphorylation and release of RPS6KB1 and binding of EIF4B to eIF-3. Phosphorylated. Phosphorylation is enhanced upon serum stimulation.

It localises to the cytoplasm. Functionally, component of the eukaryotic translation initiation factor 3 (eIF-3) complex, which is required for several steps in the initiation of protein synthesis. The eIF-3 complex associates with the 40S ribosome and facilitates the recruitment of eIF-1, eIF-1A, eIF-2:GTP:methionyl-tRNAi and eIF-5 to form the 43S pre-initiation complex (43S PIC). The eIF-3 complex stimulates mRNA recruitment to the 43S PIC and scanning of the mRNA for AUG recognition. The eIF-3 complex is also required for disassembly and recycling of post-termination ribosomal complexes and subsequently prevents premature joining of the 40S and 60S ribosomal subunits prior to initiation. The eIF-3 complex specifically targets and initiates translation of a subset of mRNAs involved in cell proliferation, including cell cycling, differentiation and apoptosis, and uses different modes of RNA stem-loop binding to exert either translational activation or repression. This subunit binds directly within the mRNA entry channel of the 40S ribosome to the aminoacyl (A) site. It may regulate the interaction between the 43S PIC and mRNA. The polypeptide is Eukaryotic translation initiation factor 3 subunit J-B (Eif3j2) (Mus musculus (Mouse)).